A 222-amino-acid chain; its full sequence is Charged multivesicular body protein 3 (222 aa).

Residue glycine 2 is the site of N-myristoyl glycine attachment. An intramolecular interaction with C-terminus region spans residues 2–113 (GLFGKTQEKP…LQKSTEVMKA (112 aa)). The stretch at 22–54 (KIRKEMRVVDRQIRDIQREEEKVKRSVKDAAKK) forms a coiled coil. Important for autoinhibitory function stretches follow at residues 59 to 64 (VCVVLA) and 168 to 169 (IL). Positions 149–222 (ESMDDQEEME…MQSRLATLRS (74 aa)) form a coiled coil. The segment at 151–220 (MDDQEEMEEA…EAMQSRLATL (70 aa)) is intramolecular interaction with N-terminus. The interaction with VPS4A stretch occupies residues 151–222 (MDDQEEMEEA…MQSRLATLRS (72 aa)). Lysine 179 participates in a covalent cross-link: Glycyl lysine isopeptide (Lys-Gly) (interchain with G-Cter in ubiquitin). The tract at residues 180-222 (APSKVTDALPEPEPLGAMAASEDEEEEEEALEAMQSRLATLRS) is disordered. Interaction with STAMBP regions lie at residues 196 to 222 (AMAA…TLRS), 203 to 207 (EEEEE), and 221 to 222 (RS). Residue serine 200 is modified to Phosphoserine. Positions 200–210 (SEDEEEEEEAL) are enriched in acidic residues. The MIT-interacting motif signature appears at 201 to 211 (EDEEEEEEALE).

It belongs to the SNF7 family. In terms of assembly, probable core component of the endosomal sorting required for transport complex III (ESCRT-III). ESCRT-III components are thought to multimerize to form a flat lattice on the perimeter membrane of the endosome. Several assembly forms of ESCRT-III may exist that interact and act sequentially. Forms a metastable monomer in solution; its core structure (without part of the putative autoinhibitory C-terminal acidic region) oligomerizes into a flat lattice via two different dimerization interfaces. In vitro, heteromerizes with CHMP2A (but not CHMP4) to form helical tubular structures that expose membrane-interacting sites on the outside whereas VPS4B can associate on the inside of the tubule. May interact with IGFBP7; the relevance of such interaction however remains unclear. Interacts with CHMP2A. Interacts with CHMP4A; the interaction requires the release of CHMP4A autoinhibition. Interacts with VPS4A. Interacts with STAMBP; the interaction appears to relieve the autoinhibition of CHMP3. Interacts with VTA1.

The protein resides in the cytoplasm. It is found in the cytosol. It localises to the membrane. The protein localises to the endosome. Its subcellular location is the late endosome membrane. Probable core component of the endosomal sorting required for transport complex III (ESCRT-III) which is involved in multivesicular bodies (MVBs) formation and sorting of endosomal cargo proteins into MVBs. MVBs contain intraluminal vesicles (ILVs) that are generated by invagination and scission from the limiting membrane of the endosome and mostly are delivered to lysosomes enabling degradation of membrane proteins, such as stimulated growth factor receptors, lysosomal enzymes and lipids. The MVB pathway appears to require the sequential function of ESCRT-O, -I,-II and -III complexes. ESCRT-III proteins mostly dissociate from the invaginating membrane before the ILV is released. The ESCRT machinery also functions in topologically equivalent membrane fission events, such as the terminal stages of cytokinesis and the budding of enveloped viruses (lentiviruses). ESCRT-III proteins are believed to mediate the necessary vesicle extrusion and/or membrane fission activities, possibly in conjunction with the AAA ATPase VPS4. Selectively binds to phosphatidylinositol 3,5-bisphosphate PtdIns(3,5)P2 and PtdIns(3,4)P2 in preference to other phosphoinositides tested. Involved in late stages of cytokinesis. Plays a role in endosomal sorting/trafficking of EGF receptor. The sequence is that of Charged multivesicular body protein 3 (CHMP3) from Bos taurus (Bovine).